The following is a 514-amino-acid chain: tRNA-2-methylthio-N(6)-dimethylallyladenosine synthase (514 aa).

The MTTase N-terminal domain occupies 68–186; that stretch reads RTFLIKTYGC…LPEILEEAYL (119 aa). [4Fe-4S] cluster contacts are provided by cysteine 77, cysteine 113, cysteine 147, cysteine 223, cysteine 227, and cysteine 230. A Radical SAM core domain is found at 209–439; the sequence is RDGHIKAWVN…NKKVGIYSQQ (231 aa). Positions 442–505 constitute a TRAM domain; sequence SQYEGKIVTV…QYSLNGTFIQ (64 aa).

This sequence belongs to the methylthiotransferase family. MiaB subfamily. As to quaternary structure, monomer. The cofactor is [4Fe-4S] cluster.

It is found in the cytoplasm. It carries out the reaction N(6)-dimethylallyladenosine(37) in tRNA + (sulfur carrier)-SH + AH2 + 2 S-adenosyl-L-methionine = 2-methylsulfanyl-N(6)-dimethylallyladenosine(37) in tRNA + (sulfur carrier)-H + 5'-deoxyadenosine + L-methionine + A + S-adenosyl-L-homocysteine + 2 H(+). Catalyzes the methylthiolation of N6-(dimethylallyl)adenosine (i(6)A), leading to the formation of 2-methylthio-N6-(dimethylallyl)adenosine (ms(2)i(6)A) at position 37 in tRNAs that read codons beginning with uridine. This chain is tRNA-2-methylthio-N(6)-dimethylallyladenosine synthase, found in Staphylococcus epidermidis (strain ATCC 35984 / DSM 28319 / BCRC 17069 / CCUG 31568 / BM 3577 / RP62A).